A 23-amino-acid polypeptide reads, in one-letter code: Potassium channel toxin kappa-KTx 1.2 (23 aa).

2 disulfide bridges follow: cysteine 4–cysteine 22 and cysteine 8–cysteine 18. A Cysteine amide modification is found at cysteine 22.

It belongs to the short scorpion toxin superfamily. Potassium channel inhibitor kappa-KTx family. Kappa-KTx 1 subfamily. In terms of processing, the two disulfide isomers globular (C1-C3, C2-C4) and beads (C1-C2, C3-C4) do not show activity on Kv10.1/KCNH1/EAG1. As to expression, expressed by the venom gland.

The protein localises to the secreted. In terms of biological role, shows weak blocking activity on voltage-gated potassium channels Kv10.1/KCNH1/EAG1 (IC(50)=26 uM), Kv1.2/KCNA2 (Kd=150 uM), Kv1.3/KCNA3 (Kd=40 uM), Kv1.6/KCNA3 (16.6% inhibition at 40 uM toxin). The block is dose-dependent, voltage-independent, and reversible. Also shows a weak inhibitory activity on the plant pathogen F.culmorum growth (IC(50)=18.8-37.7 uM). This is Potassium channel toxin kappa-KTx 1.2 from Chersonesometrus fulvipes (Indian black scorpion).